An 88-amino-acid polypeptide reads, in one-letter code: UPF0223 protein OB1419 (88 aa).

The protein belongs to the UPF0223 family.

The chain is UPF0223 protein OB1419 from Oceanobacillus iheyensis (strain DSM 14371 / CIP 107618 / JCM 11309 / KCTC 3954 / HTE831).